The following is a 93-amino-acid chain: SH3 domain-binding glutamic acid-rich-like protein 3 (93 aa).

At serine 2 the chain carries N-acetylserine. An O-linked (GalNAc...) serine glycan is attached at serine 2. A Glutaredoxin domain is found at serine 2–alanine 93. Residues threonine 9 and threonine 12 are each glycosylated (O-linked (GalNAc...) threonine).

The protein belongs to the SH3BGR family. In terms of assembly, homodimer. Interacts with MYO1C (via its IQ motifs); the interaction is dependent on calcium and takes place at membrane ruffles. In terms of processing, may be glycosylated.

Its subcellular location is the cytoplasm. The protein localises to the cytosol. It localises to the cell projection. The protein resides in the ruffle membrane. It is found in the nucleus. In terms of biological role, could act as a modulator of glutaredoxin biological activity. May play a role in cytoskeleton organization. The chain is SH3 domain-binding glutamic acid-rich-like protein 3 (SH3BGRL3) from Pongo abelii (Sumatran orangutan).